Here is a 526-residue protein sequence, read N- to C-terminus: 3',5'-cyclic-nucleotide phosphodiesterase 2 (526 aa).

The region spanning 182 to 526 (RNIEFMSFLS…EYWMKHKKPQ (345 aa)) is the PDEase domain. The active-site Proton donor is H265. A divalent metal cation contacts are provided by H269, H302, D303, and D400.

This sequence belongs to the cyclic nucleotide phosphodiesterase family. In terms of assembly, monomer. The cofactor is a divalent metal cation.

It catalyses the reaction 3',5'-cyclic AMP + H2O = AMP + H(+). In terms of biological role, controls the level of cAMP in yeast cells, together with the low-affinity cAMP phosphodiesterase (PDE1). In Saccharomyces cerevisiae (strain ATCC 204508 / S288c) (Baker's yeast), this protein is 3',5'-cyclic-nucleotide phosphodiesterase 2.